We begin with the raw amino-acid sequence, 390 residues long: Ribosomal RNA large subunit methyltransferase G (390 aa).

Belongs to the methyltransferase superfamily. RlmG family.

It is found in the cytoplasm. It carries out the reaction guanosine(1835) in 23S rRNA + S-adenosyl-L-methionine = N(2)-methylguanosine(1835) in 23S rRNA + S-adenosyl-L-homocysteine + H(+). In terms of biological role, specifically methylates the guanine in position 1835 (m2G1835) of 23S rRNA. The polypeptide is Ribosomal RNA large subunit methyltransferase G (Alcanivorax borkumensis (strain ATCC 700651 / DSM 11573 / NCIMB 13689 / SK2)).